The sequence spans 361 residues: Uroporphyrinogen decarboxylase (361 aa).

Residues 44–48, Asp-93, Tyr-168, Ser-223, and His-337 each bind substrate; that span reads RQAGR.

This sequence belongs to the uroporphyrinogen decarboxylase family. Homodimer.

It localises to the cytoplasm. The enzyme catalyses uroporphyrinogen III + 4 H(+) = coproporphyrinogen III + 4 CO2. Its pathway is porphyrin-containing compound metabolism; protoporphyrin-IX biosynthesis; coproporphyrinogen-III from 5-aminolevulinate: step 4/4. Catalyzes the decarboxylation of four acetate groups of uroporphyrinogen-III to yield coproporphyrinogen-III. This Thermobifida fusca (strain YX) protein is Uroporphyrinogen decarboxylase.